The chain runs to 84 residues: Small, acid-soluble spore protein gamma-type (84 aa).

Composition is skewed to polar residues over residues Met1–Gly25 and Ala34–Lys44. The interval Met1–Ser84 is disordered. Repeats lie at residues Gln21–Gln47 and Gln48–Gln74. Low complexity-rich tracts occupy residues Gln45–Gly57 and Gln71–Ser84.

This sequence belongs to the gamma-type SASP family.

In terms of biological role, SASP are proteins degraded in the first minutes of spore germination and provide amino acids for both new protein synthesis and metabolism. These proteins may be involved in dormant spore's high resistance to UV light. The protein is Small, acid-soluble spore protein gamma-type (sspE) of Bacillus subtilis (strain 168).